Reading from the N-terminus, the 258-residue chain is tRNA pseudouridine synthase A (258 aa).

The Nucleophile role is filled by aspartate 55. Residue tyrosine 113 coordinates substrate.

Belongs to the tRNA pseudouridine synthase TruA family. Homodimer.

The enzyme catalyses uridine(38/39/40) in tRNA = pseudouridine(38/39/40) in tRNA. Its function is as follows. Formation of pseudouridine at positions 38, 39 and 40 in the anticodon stem and loop of transfer RNAs. The sequence is that of tRNA pseudouridine synthase A from Limosilactobacillus fermentum (strain NBRC 3956 / LMG 18251) (Lactobacillus fermentum).